The following is a 384-amino-acid chain: MFGSLRTYIVSSKSISATPAFEALESALGTAKIAGIRCGITSHSPWEDVFQLAQDIQATDADLIITLGGCSITDAVKLAKLFIPNNVSTIPGAEELFARIRADESVKPATIPVINVPTTLSGSEFTCAGGATNLTTGHKQVTMHSSLYADVVVLDPRLSISTPRQVWLATGVRAIDHFVEGLYGNVAALFTDMREELGNEANEDIEKVIAGALGSLLTSLLSTKENWNDEEARLQAFLAVKECPRAGHNGIGASHGIGHQLGPLGVGHGETSCIILPWVLRYNWQHGDETARRRLGLAIDTFWGQEKVAETLGATGLSRKDADLYDVVGAYISALGLPRTLGQFDIKEEQLEGLAESAMKDWCTKVNPVTLTKDKVLDILRNAK.

It belongs to the iron-containing alcohol dehydrogenase family. Fe cation is required as a cofactor.

It participates in mycotoxin biosynthesis. In terms of biological role, dehydrogenase; part of the gene cluster that mediates the biosynthesis of the host-selective toxins (HSTs) AAL-toxins, sphinganine-analog mycotoxins responsible for Alternaria stem canker on tomato by the tomato pathotype. The biosynthesis starts with the polyketide synthase ALT1-catalyzed C-16 carbon chain assembly from one starter acetyl-CoA unit with malonyl-CoA extender units. ALT1 also selectively transfers methyl groups at the first and the third cycle of chain elongation for AAL toxin. The C-16 polyketide chain is released from the enzyme by a nucleophilic attack of a carbanion, which is derived from R-carbon of glycin by decarboxylation, on the carbonyl carbon of polyketide acyl chain. This step is probably catalyzed by a pyridoxal 5'-phosphate-dependent aminoacyl transferase ALT4. The respective functions of the other enzymes encoded by the cluster have still to be elucidated. The sphingosine N-acyltransferase-like protein ALT7 seems not to act as a resistance/self-tolerance factor against the toxin in the toxin biosynthetic gene cluster, contrary to what is expected. The sequence is that of Dehydrogenase ALT3 from Alternaria alternata (Alternaria rot fungus).